A 179-amino-acid chain; its full sequence is Nucleoside diphosphate kinase 6 (179 aa).

ATP is bound by residues lysine 18, phenylalanine 67, arginine 95, threonine 101, arginine 115, and asparagine 125. The active-site Pros-phosphohistidine intermediate is the histidine 128.

The protein belongs to the NDK family. Mg(2+) serves as cofactor.

The enzyme catalyses a 2'-deoxyribonucleoside 5'-diphosphate + ATP = a 2'-deoxyribonucleoside 5'-triphosphate + ADP. The catalysed reaction is a ribonucleoside 5'-diphosphate + ATP = a ribonucleoside 5'-triphosphate + ADP. Its function is as follows. Major role in the synthesis of nucleoside triphosphates other than ATP. The ATP gamma phosphate is transferred to the NDP beta phosphate via a ping-pong mechanism, using a phosphorylated active-site intermediate. This Xenopus tropicalis (Western clawed frog) protein is Nucleoside diphosphate kinase 6 (nme6).